We begin with the raw amino-acid sequence, 250 residues long: Geranylgeranylglyceryl phosphate synthase (250 aa).

Positions 26 and 55 each coordinate Mg(2+). Sn-glycerol 1-phosphate contacts are provided by residues 174 to 180 (YLEAGSG), 205 to 206 (GG), and 227 to 228 (GT).

It belongs to the GGGP/HepGP synthase family. Group II subfamily. The cofactor is Mg(2+).

The protein resides in the cytoplasm. The catalysed reaction is sn-glycerol 1-phosphate + (2E,6E,10E)-geranylgeranyl diphosphate = sn-3-O-(geranylgeranyl)glycerol 1-phosphate + diphosphate. The protein operates within membrane lipid metabolism; glycerophospholipid metabolism. Functionally, prenyltransferase that catalyzes the transfer of the geranylgeranyl moiety of geranylgeranyl diphosphate (GGPP) to the C3 hydroxyl of sn-glycerol-1-phosphate (G1P). This reaction is the first ether-bond-formation step in the biosynthesis of archaeal membrane lipids. The protein is Geranylgeranylglyceryl phosphate synthase of Nitrosopumilus maritimus (strain SCM1).